We begin with the raw amino-acid sequence, 411 residues long: UPF0761 membrane protein PA0951 (411 aa).

6 helical membrane-spanning segments follow: residues 36–56 (LFAVVPMMTVMFSMLSLIPAF), 92–112 (HLTWVGVVFLAVTAFTMLVTI), 132–152 (FLLYWAILSLGPLLLGAGFAV), 174–194 (LLGLMPLAFSVAAFTLLYSAV), 207–229 (GGVFTAVLFEAAKTLFGLYVSLF), and 244–264 (IFLLWIYLSWMIVLFGAVLVC).

Belongs to the UPF0761 family.

Its subcellular location is the cell inner membrane. The chain is UPF0761 membrane protein PA0951 from Pseudomonas aeruginosa (strain ATCC 15692 / DSM 22644 / CIP 104116 / JCM 14847 / LMG 12228 / 1C / PRS 101 / PAO1).